The chain runs to 159 residues: 2-C-methyl-D-erythritol 2,4-cyclodiphosphate synthase (159 aa).

Positions 8 and 10 each coordinate a divalent metal cation. Residues aspartate 8 to histidine 10 and histidine 34 to serine 35 contribute to the 4-CDP-2-C-methyl-D-erythritol 2-phosphate site. Residue histidine 42 participates in a divalent metal cation binding. 4-CDP-2-C-methyl-D-erythritol 2-phosphate is bound by residues aspartate 56–glycine 58, phenylalanine 61–aspartate 65, alanine 100–alanine 106, threonine 132–glutamate 135, phenylalanine 139, and arginine 142.

It belongs to the IspF family. Homotrimer. The cofactor is a divalent metal cation.

It catalyses the reaction 4-CDP-2-C-methyl-D-erythritol 2-phosphate = 2-C-methyl-D-erythritol 2,4-cyclic diphosphate + CMP. It functions in the pathway isoprenoid biosynthesis; isopentenyl diphosphate biosynthesis via DXP pathway; isopentenyl diphosphate from 1-deoxy-D-xylulose 5-phosphate: step 4/6. Involved in the biosynthesis of isopentenyl diphosphate (IPP) and dimethylallyl diphosphate (DMAPP), two major building blocks of isoprenoid compounds. Catalyzes the conversion of 4-diphosphocytidyl-2-C-methyl-D-erythritol 2-phosphate (CDP-ME2P) to 2-C-methyl-D-erythritol 2,4-cyclodiphosphate (ME-CPP) with a corresponding release of cytidine 5-monophosphate (CMP). The chain is 2-C-methyl-D-erythritol 2,4-cyclodiphosphate synthase from Aliivibrio salmonicida (strain LFI1238) (Vibrio salmonicida (strain LFI1238)).